A 172-amino-acid polypeptide reads, in one-letter code: 18.6 kDa class III heat shock protein (172 aa).

The disordered stretch occupies residues 29–54 (RRSAGDHAHHAAHGHGQHRISGIGGG). The sHSP domain occupies 48-172 (ISGIGGGAPV…KTKSVQVTIA (125 aa)).

This sequence belongs to the small heat shock protein (HSP20) family. May form oligomeric structures.

Its subcellular location is the cytoplasm. This Oryza sativa subsp. japonica (Rice) protein is 18.6 kDa class III heat shock protein (HSP18.6).